The chain runs to 301 residues: Mycothiol acetyltransferase (301 aa).

N-acetyltransferase domains lie at 7 to 150 and 152 to 301; these read VDWQ…PPVD and VRFA…AVEG. Asp39 provides a ligand contact to 1D-myo-inositol 2-(L-cysteinylamino)-2-deoxy-alpha-D-glucopyranoside. Residues 80-82 and 88-93 each bind acetyl-CoA; these read LVV and RRGIGS. 1D-myo-inositol 2-(L-cysteinylamino)-2-deoxy-alpha-D-glucopyranoside is bound by residues Glu179, Lys220, and Glu228. 232-234 contributes to the acetyl-CoA binding site; the sequence is VGV. Residue Tyr271 coordinates 1D-myo-inositol 2-(L-cysteinylamino)-2-deoxy-alpha-D-glucopyranoside. Acetyl-CoA is bound at residue 276–281; that stretch reads NTAAVK.

Belongs to the acetyltransferase family. MshD subfamily. Monomer.

It catalyses the reaction 1D-myo-inositol 2-(L-cysteinylamino)-2-deoxy-alpha-D-glucopyranoside + acetyl-CoA = mycothiol + CoA + H(+). Catalyzes the transfer of acetyl from acetyl-CoA to desacetylmycothiol (Cys-GlcN-Ins) to form mycothiol. In Mycolicibacterium vanbaalenii (strain DSM 7251 / JCM 13017 / BCRC 16820 / KCTC 9966 / NRRL B-24157 / PYR-1) (Mycobacterium vanbaalenii), this protein is Mycothiol acetyltransferase.